The primary structure comprises 170 residues: Adenine phosphoribosyltransferase (170 aa).

This sequence belongs to the purine/pyrimidine phosphoribosyltransferase family. As to quaternary structure, homodimer.

Its subcellular location is the cytoplasm. The catalysed reaction is AMP + diphosphate = 5-phospho-alpha-D-ribose 1-diphosphate + adenine. Its pathway is purine metabolism; AMP biosynthesis via salvage pathway; AMP from adenine: step 1/1. Functionally, catalyzes a salvage reaction resulting in the formation of AMP, that is energically less costly than de novo synthesis. The protein is Adenine phosphoribosyltransferase of Geobacillus kaustophilus (strain HTA426).